The sequence spans 385 residues: Protein pelota homolog (385 aa).

Residue K162 forms a Glycyl lysine isopeptide (Lys-Gly) (interchain with G-Cter in SUMO2) linkage. Phosphoserine occurs at positions 374, 380, 381, and 382.

The protein belongs to the eukaryotic release factor 1 family. Pelota subfamily. In terms of assembly, component of the Pelota-HBS1L complex, also named Dom34-Hbs1 complex, composed of PELO and HBS1L. Interacts with PINK1. Interacts with ABCE1. Interacts with CNOT4. A divalent metal cation serves as cofactor.

Its subcellular location is the cytoplasm. In terms of biological role, component of the Pelota-HBS1L complex, a complex that recognizes stalled ribosomes and triggers the No-Go Decay (NGD) pathway. In the Pelota-HBS1L complex, PELO recognizes ribosomes stalled at the 3' end of an mRNA and engages stalled ribosomes by destabilizing mRNA in the mRNA channel. Following mRNA extraction from stalled ribosomes by the SKI complex, the Pelota-HBS1L complex promotes recruitment of ABCE1, which drives the disassembly of stalled ribosomes, followed by degradation of damaged mRNAs as part of the NGD pathway. As part of the PINK1-regulated signaling, upon mitochondrial damage is recruited to the ribosome/mRNA-ribonucleoprotein complex associated to mitochondrial outer membrane thereby enabling the recruitment of autophagy receptors and induction of mitophagy. In Bos taurus (Bovine), this protein is Protein pelota homolog (PELO).